A 492-amino-acid chain; its full sequence is Mitochondrial distribution and morphology protein 12 (492 aa).

Positions 1 to 492 (MSIDLNWETV…VYPSFWTFLV (492 aa)) constitute an SMP-LTD domain. 3 disordered regions span residues 68–158 (DFYE…STPG), 199–301 (LEGH…GHPR), and 379–434 (AVGG…GSGN). Over residues 78–90 (VASDDSEGEEDAV) the composition is skewed to acidic residues. Residues 130–139 (SPGGPGGPGM) show a composition bias toward gly residues. Over residues 246-257 (LNPNSLAPPSSS) the composition is skewed to low complexity. Over residues 270–285 (TTPAPGSATALSGSNE) the composition is skewed to polar residues. The span at 387–400 (GLSSPGEGPSQAQG) shows a compositional bias: low complexity. Positions 401 to 415 (QGQGQGQGQGQGQTP) are enriched in gly residues. Over residues 416-428 (GAGQQKQQKKQAG) the composition is skewed to low complexity.

Belongs to the MDM12 family. In terms of assembly, component of the ER-mitochondria encounter structure (ERMES) or MDM complex, composed of MMM1, MDM10, MDM12 and MDM34. An MMM1 homodimer associates with one molecule of MDM12 on each side in a pairwise head-to-tail manner, and the SMP-LTD domains of MMM1 and MDM12 generate a continuous hydrophobic tunnel for phospholipid trafficking.

It localises to the mitochondrion outer membrane. The protein localises to the endoplasmic reticulum membrane. In terms of biological role, component of the ERMES/MDM complex, which serves as a molecular tether to connect the endoplasmic reticulum (ER) and mitochondria. Components of this complex are involved in the control of mitochondrial shape and protein biogenesis, and function in nonvesicular lipid trafficking between the ER and mitochondria. MDM12 is required for the interaction of the ER-resident membrane protein MMM1 and the outer mitochondrial membrane-resident beta-barrel protein MDM10. The MDM12-MMM1 subcomplex functions in the major beta-barrel assembly pathway that is responsible for biogenesis of all mitochondrial outer membrane beta-barrel proteins, and acts in a late step after the SAM complex. The MDM10-MDM12-MMM1 subcomplex further acts in the TOM40-specific pathway after the action of the MDM12-MMM1 complex. Essential for establishing and maintaining the structure of mitochondria and maintenance of mtDNA nucleoids. The sequence is that of Mitochondrial distribution and morphology protein 12 from Chaetomium globosum (strain ATCC 6205 / CBS 148.51 / DSM 1962 / NBRC 6347 / NRRL 1970) (Soil fungus).